A 399-amino-acid polypeptide reads, in one-letter code: Protochlorophyllide reductase, chloroplastic (399 aa).

The transit peptide at 1 to 64 (MALQTASMLP…RQKVGAVRAE (64 aa)) directs the protein to the chloroplast.

This sequence belongs to the short-chain dehydrogenases/reductases (SDR) family. POR subfamily.

The protein resides in the plastid. It is found in the chloroplast. It carries out the reaction chlorophyllide a + NADP(+) = protochlorophyllide a + NADPH + H(+). The protein operates within porphyrin-containing compound metabolism; chlorophyll biosynthesis. In terms of biological role, phototransformation of protochlorophyllide (Pchlide) to chlorophyllide (Chlide). This chain is Protochlorophyllide reductase, chloroplastic (3PCR), found in Pisum sativum (Garden pea).